The following is a 761-amino-acid chain: Phosphoribosylformylglycinamidine synthase subunit PurL (761 aa).

The active site involves His58. 2 residues coordinate ATP: Tyr61 and Lys105. Glu107 lines the Mg(2+) pocket. Substrate is bound by residues 108–111 (SHNH) and Arg130. The active-site Proton acceptor is the His109. Mg(2+) is bound at residue Asp131. Gln259 is a substrate binding site. Asp287 is a binding site for Mg(2+). 331–333 (ESQ) serves as a coordination point for substrate. Positions 519 and 556 each coordinate ATP. Position 557 (Asn557) interacts with Mg(2+). Ser559 contributes to the substrate binding site.

The protein belongs to the FGAMS family. Monomer. Part of the FGAM synthase complex composed of 1 PurL, 1 PurQ and 2 PurS subunits.

Its subcellular location is the cytoplasm. It carries out the reaction N(2)-formyl-N(1)-(5-phospho-beta-D-ribosyl)glycinamide + L-glutamine + ATP + H2O = 2-formamido-N(1)-(5-O-phospho-beta-D-ribosyl)acetamidine + L-glutamate + ADP + phosphate + H(+). Its pathway is purine metabolism; IMP biosynthesis via de novo pathway; 5-amino-1-(5-phospho-D-ribosyl)imidazole from N(2)-formyl-N(1)-(5-phospho-D-ribosyl)glycinamide: step 1/2. Part of the phosphoribosylformylglycinamidine synthase complex involved in the purines biosynthetic pathway. Catalyzes the ATP-dependent conversion of formylglycinamide ribonucleotide (FGAR) and glutamine to yield formylglycinamidine ribonucleotide (FGAM) and glutamate. The FGAM synthase complex is composed of three subunits. PurQ produces an ammonia molecule by converting glutamine to glutamate. PurL transfers the ammonia molecule to FGAR to form FGAM in an ATP-dependent manner. PurS interacts with PurQ and PurL and is thought to assist in the transfer of the ammonia molecule from PurQ to PurL. In Rhodococcus opacus (strain B4), this protein is Phosphoribosylformylglycinamidine synthase subunit PurL.